The primary structure comprises 286 residues: 4-hydroxybenzoate octaprenyltransferase (286 aa).

7 helical membrane passes run 21–40, 96–116, 142–162, 167–187, 210–230, 235–255, and 266–286; these read GTLLLLWPCLMALVLAAGGM, LFVILGLAAFGLVLLLNGLVV, FLGVVWSWSIPMAYAAQTGEV, WWLFAANWFWTVAYDTMYAMV, QIIGLFQFAALLCFIAAGWSA, LYGLGLLTFVGFSTYQQMLIF, and FLNNNWAGLALFVGLGADYLF.

The protein belongs to the UbiA prenyltransferase family. It depends on Mg(2+) as a cofactor.

It is found in the cell inner membrane. The catalysed reaction is all-trans-octaprenyl diphosphate + 4-hydroxybenzoate = 4-hydroxy-3-(all-trans-octaprenyl)benzoate + diphosphate. The protein operates within cofactor biosynthesis; ubiquinone biosynthesis. Catalyzes the prenylation of para-hydroxybenzoate (PHB) with an all-trans polyprenyl group. Mediates the second step in the final reaction sequence of ubiquinone-8 (UQ-8) biosynthesis, which is the condensation of the polyisoprenoid side chain with PHB, generating the first membrane-bound Q intermediate 3-octaprenyl-4-hydroxybenzoate. This Shewanella sp. (strain MR-4) protein is 4-hydroxybenzoate octaprenyltransferase.